Consider the following 365-residue polypeptide: Peptide chain release factor 2 (365 aa).

Residue glutamine 251 is modified to N5-methylglutamine.

This sequence belongs to the prokaryotic/mitochondrial release factor family. Post-translationally, methylated by PrmC. Methylation increases the termination efficiency of RF2.

Its subcellular location is the cytoplasm. Peptide chain release factor 2 directs the termination of translation in response to the peptide chain termination codons UGA and UAA. The chain is Peptide chain release factor 2 from Sulfurimonas denitrificans (strain ATCC 33889 / DSM 1251) (Thiomicrospira denitrificans (strain ATCC 33889 / DSM 1251)).